The chain runs to 451 residues: Cindoxin reductase (451 aa).

FAD-binding residues include Ala24, Glu45, Leu53, and Val89. NADP(+)-binding positions include 157–160 (NGNV) and 197–198 (RS). FAD is bound by residues Trp338 and 345 to 347 (GGI). Gly345 lines the NADP(+) pocket.

The protein belongs to the ferredoxin--NADP reductase type 1 family. FAD serves as cofactor.

Its function is as follows. Involved in the degradation of cineol (eucalyptol). Catalyzes the reduction of cindoxin (CinC). The sequence is that of Cindoxin reductase (cinB) from Citrobacter braakii.